Reading from the N-terminus, the 116-residue chain is Large ribosomal subunit protein bL19 (116 aa).

Belongs to the bacterial ribosomal protein bL19 family.

Functionally, this protein is located at the 30S-50S ribosomal subunit interface and may play a role in the structure and function of the aminoacyl-tRNA binding site. This Pseudomonas putida (strain W619) protein is Large ribosomal subunit protein bL19.